The sequence spans 66 residues: Large ribosomal subunit protein uL29 (66 aa).

This sequence belongs to the universal ribosomal protein uL29 family.

The protein is Large ribosomal subunit protein uL29 of Ruegeria sp. (strain TM1040) (Silicibacter sp.).